We begin with the raw amino-acid sequence, 303 residues long: tRNA dimethylallyltransferase (303 aa).

ATP is bound at residue 9–16 (GPTASGKS). Position 11–16 (11–16 (TASGKS)) interacts with substrate. The tract at residues 34 to 37 (DSKQ) is interaction with substrate tRNA.

It belongs to the IPP transferase family. Monomer. The cofactor is Mg(2+).

It catalyses the reaction adenosine(37) in tRNA + dimethylallyl diphosphate = N(6)-dimethylallyladenosine(37) in tRNA + diphosphate. Functionally, catalyzes the transfer of a dimethylallyl group onto the adenine at position 37 in tRNAs that read codons beginning with uridine, leading to the formation of N6-(dimethylallyl)adenosine (i(6)A). This Ehrlichia chaffeensis (strain ATCC CRL-10679 / Arkansas) protein is tRNA dimethylallyltransferase.